The primary structure comprises 74 residues: uncharacterized protein (74 aa).

This is an uncharacterized protein from Salmonella typhimurium.